A 414-amino-acid chain; its full sequence is Putative transporter AmpG 4 (414 aa).

12 helical membrane passes run 15–35 (IFIL…TLAV), 44–63 (IAVI…KVFW), 84–104 (WLIL…KENP), 109–129 (TSFY…DIAV), 150–170 (VFGY…LAEI), 177–197 (LTFC…ITVN), 230–250 (FAVT…MLGA), 268–288 (IIAK…GGIV), 295–315 (FKGL…FIWL), 324–344 (ALLI…TALV), 360–379 (YALL…IYAG), and 389–409 (GFFL…MYLN).

The protein belongs to the major facilitator superfamily.

Its subcellular location is the cell inner membrane. In Rickettsia conorii (strain ATCC VR-613 / Malish 7), this protein is Putative transporter AmpG 4 (ampG4).